The chain runs to 164 residues: Protein SprT (164 aa).

Positions 14-156 (QQAETFFKRP…LCKRCRAILV (143 aa)) constitute a SprT-like domain. Residue H69 participates in Zn(2+) binding. The active site involves E70. Position 73 (H73) interacts with Zn(2+).

It belongs to the SprT family. It depends on Zn(2+) as a cofactor.

The protein resides in the cytoplasm. The chain is Protein SprT from Pseudomonas putida (strain GB-1).